The chain runs to 279 residues: Energy-coupling factor transporter ATP-binding protein EcfA1 (279 aa).

The ABC transporter domain occupies 6-240; it reads VEFRNVSFRY…KDALREIGLD (235 aa). 40–47 contributes to the ATP binding site; that stretch reads GHNGSGKS.

Belongs to the ABC transporter superfamily. Energy-coupling factor EcfA family. Forms a stable energy-coupling factor (ECF) transporter complex composed of 2 membrane-embedded substrate-binding proteins (S component), 2 ATP-binding proteins (A component) and 2 transmembrane proteins (T component).

The protein resides in the cell membrane. Functionally, ATP-binding (A) component of a common energy-coupling factor (ECF) ABC-transporter complex. Unlike classic ABC transporters this ECF transporter provides the energy necessary to transport a number of different substrates. The polypeptide is Energy-coupling factor transporter ATP-binding protein EcfA1 (Oceanobacillus iheyensis (strain DSM 14371 / CIP 107618 / JCM 11309 / KCTC 3954 / HTE831)).